A 1726-amino-acid polypeptide reads, in one-letter code: Protein NLRC5 (1726 aa).

In terms of domain architecture, NACHT spans 207–537 (RVVMLSGQAG…THLTIQEFMA (331 aa)). 213–220 (GQAGSGKT) lines the ATP pocket. LRR repeat units follow at residues 879-902 (LTVLNLSHNALGNRGLKKLLEHLP), 904-925 (LDTIQEINVSDNGVDMDGVVLL), 1002-1025 (NLDFSHGTLKDESTEKLLKFLPNM), 1026-1048 (ASLNLLNLSHIQMSTDSALLLVQ), 1103-1126 (CHHLTDLDLSSNFLKDEDVKTFVQ), 1128-1155 (LPKLQISGSVSLNNNNLTEVGVLYLLSL), 1212-1235 (LNSVQTLELRNNSFSADTIKYLIT), 1351-1374 (AEFLSSVLPSLKNLKILSLSSKGE), 1387-1411 (AQKHLEQLSLAHHVIKDRGAAVLGN), 1421-1443 (SLSLLKCLDWTATGGRDLVRGLV), 1447-1468 (SLEEIRLDSIELDEESIDCFAQ), 1502-1525 (LIELEEIELIGLRMGDRGVEELVK), 1532-1553 (RLRKINLSENRVSDHAGEMLVK), 1560-1580 (ALQQIHLFRNNLGHSSAAVLG), 1588-1609 (ELTELDLSENQMESKGCSSVCE), 1616-1637 (ALKKLHLTSIGTSDLVNVASCL), 1642-1662 (SIEDISLSWNNCENDVVLKLA), and 1670-1691 (KLKRLDLEANNINTSGAMALAT).

This sequence belongs to the NLRP family.

It is found in the cytoplasm. Its function is as follows. Probable regulator of the NF-kappa-B and type I interferon signaling pathways. May also regulate the type II interferon signaling pathway. Plays a role in homeostatic control of innate immunity and in antiviral defense mechanisms. This Ictalurus punctatus (Channel catfish) protein is Protein NLRC5 (nlrc5).